Here is a 93-residue protein sequence, read N- to C-terminus: Protein F-93 (93 aa).

As to quaternary structure, homodimer.

In terms of biological role, probable transcription factor that recognizes a (pseudo-)palindromic DNA target sequence. This Saccharolobus solfataricus (Sulfolobus solfataricus) protein is Protein F-93.